The chain runs to 382 residues: Putative UDP-sugar transporter DDB_G0278631 (382 aa).

7 consecutive transmembrane segments (helical) span residues 117-137 (FSAS…ILHI), 183-203 (MYSA…YFIL), 211-231 (IIAS…TDLS), 234-254 (SLGY…LIYV), 264-284 (YDML…LMIV), 302-322 (FQAY…CIFF), and 354-374 (IIIH…SIWY).

The protein belongs to the TPT transporter family. SLC35D subfamily.

The protein resides in the membrane. Its function is as follows. May be nvolved in the import of UDP-sugars. This is Putative UDP-sugar transporter DDB_G0278631 from Dictyostelium discoideum (Social amoeba).